The following is a 342-amino-acid chain: MNHSLKPWNTFGIDHNAQHIVCAEDEQQLLNAWQHATAEGQPVLILGEGSNVLFLEDYRGTVIINRIKGIEIHDEPDAWYLHVGAGENWHRLVKYTLQEGMPGLENLALIPGCIGSSPIQNIGAYGVELQRVCAYVDCVELATGKQVRLTAKECRFGYRDSIFKHEYQDRFAIVAVGLRLPKEWQPVLTYGDLTRLDPSTVTPQQVFDAVCHMRTTKLPDPKVNGNAGSFFKNPVVSAETANALLAQFPTAPHYPQVDGSVKLAAGWLIDQCQLKGTQIGGAAVHRQQALVLINEHDAKSEDVVQLAHHVRQKVGEKFNVWLEPEVRFIGASGEVSAVETIS.

Residues 13 to 183 (IDHNAQHIVC…VAVGLRLPKE (171 aa)) enclose the FAD-binding PCMH-type domain. Arginine 159 is an active-site residue. Tyrosine 190 is a substrate binding site. The active-site Proton donor is the serine 229. The active site involves glutamate 325.

The protein belongs to the MurB family. Requires FAD as cofactor.

The protein resides in the cytoplasm. It carries out the reaction UDP-N-acetyl-alpha-D-muramate + NADP(+) = UDP-N-acetyl-3-O-(1-carboxyvinyl)-alpha-D-glucosamine + NADPH + H(+). It functions in the pathway cell wall biogenesis; peptidoglycan biosynthesis. Its function is as follows. Cell wall formation. In Escherichia coli O6:H1 (strain CFT073 / ATCC 700928 / UPEC), this protein is UDP-N-acetylenolpyruvoylglucosamine reductase.